We begin with the raw amino-acid sequence, 548 residues long: Chaperonin GroEL (548 aa).

Residues 30–33, Lys-51, 87–91, Gly-415, 479–481, and Asp-495 contribute to the ATP site; these read TLGP, DGTTT, and NAA. The segment at 524–548 is disordered; the sequence is LPKEDKSSDSSSSPAGGMGGMGGMM. Gly residues predominate over residues 539 to 548; sequence GGMGGMGGMM.

It belongs to the chaperonin (HSP60) family. Forms a cylinder of 14 subunits composed of two heptameric rings stacked back-to-back. Interacts with the co-chaperonin GroES.

It localises to the cytoplasm. It catalyses the reaction ATP + H2O + a folded polypeptide = ADP + phosphate + an unfolded polypeptide.. Together with its co-chaperonin GroES, plays an essential role in assisting protein folding. The GroEL-GroES system forms a nano-cage that allows encapsulation of the non-native substrate proteins and provides a physical environment optimized to promote and accelerate protein folding. The sequence is that of Chaperonin GroEL from Buchnera aphidicola subsp. Acyrthosiphon pisum (strain Tuc7).